A 954-amino-acid polypeptide reads, in one-letter code: Endoplasmic reticulum aminopeptidase 2 (954 aa).

The Cytoplasmic portion of the chain corresponds to 1-7 (MANSCRK). A helical; Signal-anchor for type II membrane protein transmembrane segment spans residues 8–28 (LIFNIYVVFYCSAVIMPQICI). Topologically, residues 29–954 (CSQFTSSPID…TLRKWLLTSI (926 aa)) are lumenal. N-linked (GlcNAc...) asparagine glycans are attached at residues N79 and N113. Residues E194 and 328-332 (GAMEN) contribute to the substrate site. H364 is a Zn(2+) binding site. The active-site Proton acceptor is the E365. The Zn(2+) site is built by H368 and E387. N-linked (GlcNAc...) asparagine glycosylation occurs at N399. C415 and C454 are disulfide-bonded. N644 carries an N-linked (GlcNAc...) asparagine glycan. A disulfide bridge connects residues C753 and C760.

Belongs to the peptidase M1 family. Heterodimer with ERAP1. Zn(2+) is required as a cofactor. Post-translationally, N-glycosylated.

The protein resides in the endoplasmic reticulum membrane. Its function is as follows. Aminopeptidase that plays a central role in peptide trimming, a step required for the generation of most HLA class I-binding peptides. Peptide trimming is essential to customize longer precursor peptides to fit them to the correct length required for presentation on MHC class I molecules. Preferentially hydrolyzes the basic residues Arg and Lys. This is Endoplasmic reticulum aminopeptidase 2 (ERAP2) from Bos taurus (Bovine).